A 168-amino-acid polypeptide reads, in one-letter code: ATP synthase subunit b (168 aa).

A helical transmembrane segment spans residues 11–31 (EISIINTLWYLIVFSILLLAV).

This sequence belongs to the ATPase B chain family. In terms of assembly, F-type ATPases have 2 components, F(1) - the catalytic core - and F(0) - the membrane proton channel. F(1) has five subunits: alpha(3), beta(3), gamma(1), delta(1), epsilon(1). F(0) has three main subunits: a(1), b(2) and c(10-14). The alpha and beta chains form an alternating ring which encloses part of the gamma chain. F(1) is attached to F(0) by a central stalk formed by the gamma and epsilon chains, while a peripheral stalk is formed by the delta and b chains.

It localises to the cell membrane. Functionally, f(1)F(0) ATP synthase produces ATP from ADP in the presence of a proton or sodium gradient. F-type ATPases consist of two structural domains, F(1) containing the extramembraneous catalytic core and F(0) containing the membrane proton channel, linked together by a central stalk and a peripheral stalk. During catalysis, ATP synthesis in the catalytic domain of F(1) is coupled via a rotary mechanism of the central stalk subunits to proton translocation. In terms of biological role, component of the F(0) channel, it forms part of the peripheral stalk, linking F(1) to F(0). The sequence is that of ATP synthase subunit b from Lactobacillus delbrueckii subsp. bulgaricus (strain ATCC 11842 / DSM 20081 / BCRC 10696 / JCM 1002 / NBRC 13953 / NCIMB 11778 / NCTC 12712 / WDCM 00102 / Lb 14).